We begin with the raw amino-acid sequence, 72 residues long: Translation initiation factor IF-1 (72 aa).

Residues 1 to 72 (MAKDDVIEID…DKGRITYRYK (72 aa)) enclose the S1-like domain.

Belongs to the IF-1 family. In terms of assembly, component of the 30S ribosomal translation pre-initiation complex which assembles on the 30S ribosome in the order IF-2 and IF-3, IF-1 and N-formylmethionyl-tRNA(fMet); mRNA recruitment can occur at any time during PIC assembly.

The protein resides in the cytoplasm. Functionally, one of the essential components for the initiation of protein synthesis. Stabilizes the binding of IF-2 and IF-3 on the 30S subunit to which N-formylmethionyl-tRNA(fMet) subsequently binds. Helps modulate mRNA selection, yielding the 30S pre-initiation complex (PIC). Upon addition of the 50S ribosomal subunit IF-1, IF-2 and IF-3 are released leaving the mature 70S translation initiation complex. In Campylobacter curvus (strain 525.92), this protein is Translation initiation factor IF-1.